We begin with the raw amino-acid sequence, 625 residues long: Cysteine-rich receptor-like protein kinase 46 (625 aa).

A signal peptide spans 1–23 (MASTLISSLAVVLPLTLLAPSMS). The Extracellular segment spans residues 24–252 (MKISRIDVLG…LLAMSFTKEN (229 aa)). 2 Gnk2-homologous domains span residues 29–130 (IDVL…NYSF) and 135–237 (VSHQ…NYTF). N-linked (GlcNAc...) asparagine glycosylation is found at Asn38, Asn127, Asn234, and Asn252. Residues 253-273 (LTYIFVISMVGVLAIAAGFWC) traverse the membrane as a helical segment. The Cytoplasmic segment spans residues 274 to 625 (GKCFYMRTSP…TKPPFLHDSM (352 aa)). A Protein kinase domain is found at 331–621 (FNESCKLGVG…LPTPTKPPFL (291 aa)). Residues 337–345 (LGVGGYGEV) and Lys359 each bind ATP. The residue at position 404 (Tyr404) is a Phosphotyrosine. The Proton acceptor role is filled by Asp454. Ser458 carries the phosphoserine modification. Thr499 is subject to Phosphothreonine. Tyr507 bears the Phosphotyrosine mark.

The protein belongs to the protein kinase superfamily. Ser/Thr protein kinase family. CRK subfamily.

It localises to the membrane. The catalysed reaction is L-seryl-[protein] + ATP = O-phospho-L-seryl-[protein] + ADP + H(+). It catalyses the reaction L-threonyl-[protein] + ATP = O-phospho-L-threonyl-[protein] + ADP + H(+). The sequence is that of Cysteine-rich receptor-like protein kinase 46 from Arabidopsis thaliana (Mouse-ear cress).